The chain runs to 229 residues: C-type lectin domain family 1 member B (229 aa).

At 1-33 (MQDEDGYITLNIKTRKPALISVGSASSSWWRVM) the chain is on the cytoplasmic side. Y7 bears the Phosphotyrosine mark. Positions 7–10 (YITL) match the ITAM motif. The helical; Signal-anchor for type II membrane protein transmembrane segment at 34-54 (ALILLILCVGMVVGLVALGIW) threads the bilayer. The Extracellular segment spans residues 55–229 (SVMQRNYLQG…AGMTKVDQLP (175 aa)). N-linked (GlcNAc...) asparagine glycosylation is present at N68. A disulfide bridge connects residues C102 and C113. The region spanning 109 to 217 (YGDSCYGFFR…CENKHYLMCE (109 aa)) is the C-type lectin domain. Residues N120 and N134 are each glycosylated (N-linked (GlcNAc...) asparagine). Cystine bridges form between C130/C216 and C195/C208.

In terms of assembly, homodimer. Interacts (via cytoplasmic domain) with RACK1; promotes CLEC1B ubiquitination and proteasome-mediated degradation. Interacts (dimer) with SYK (via SH2 domains). Interacts with PDPN; the interaction is independent of CLEC1B glycosylation and activates CLEC1B. Post-translationally, glycosylated. Phosphorylated on tyrosine residue in response to rhodocytin binding. As to expression, expressed preferentially in the liver. Also expressed in immune cells of myeloid origin and on the surface of platelets.

The protein resides in the membrane. In terms of biological role, C-type lectin-like receptor that functions as a platelet receptor for the lymphatic endothelial marker, PDPN. After ligand activation, signals via sequential activation of SRC and SYK tyrosine kinases leading to activation of PLCG2. Its function is as follows. (Microbial infection) Acts as a receptor for the platelet-aggregating snake venom protein rhodocytin. Rhodocytin binding leads to tyrosine phosphorylation and this promotes the binding of spleen tyrosine kinase (SYK) and initiation of downstream tyrosine phosphorylation events and activation of PLCG2. (Microbial infection) Acts as an attachment factor for Human immunodeficiency virus type 1 (HIV-1) and facilitates its capture by platelets. This Homo sapiens (Human) protein is C-type lectin domain family 1 member B (CLEC1B).